Reading from the N-terminus, the 171-residue chain is Nicotinamide-nucleotide adenylyltransferase (171 aa).

Belongs to the archaeal NMN adenylyltransferase family.

It is found in the cytoplasm. It carries out the reaction beta-nicotinamide D-ribonucleotide + ATP + H(+) = diphosphate + NAD(+). It functions in the pathway cofactor biosynthesis; NAD(+) biosynthesis; NAD(+) from nicotinamide D-ribonucleotide: step 1/1. This is Nicotinamide-nucleotide adenylyltransferase from Methanococcus maripaludis (strain DSM 14266 / JCM 13030 / NBRC 101832 / S2 / LL).